The primary structure comprises 95 residues: Protein TusB (95 aa).

The protein belongs to the DsrH/TusB family. In terms of assembly, heterohexamer, formed by a dimer of trimers. The hexameric TusBCD complex contains 2 copies each of TusB, TusC and TusD. The TusBCD complex interacts with TusE.

It localises to the cytoplasm. Part of a sulfur-relay system required for 2-thiolation of 5-methylaminomethyl-2-thiouridine (mnm(5)s(2)U) at tRNA wobble positions. The chain is Protein TusB from Escherichia coli O157:H7.